The primary structure comprises 1943 residues: Sickle tail protein homolog (1943 aa).

Disordered stretches follow at residues 1–79 (MEEN…KEIL) and 112–177 (QERL…RSTN). Positions 38 to 47 (AECRRTKERL) are enriched in basic and acidic residues. Over residues 48–62 (SNGNSRGSVSKSSRN) the composition is skewed to polar residues. Phosphoserine is present on Ser169. At Tyr244 the chain carries Phosphotyrosine. The disordered stretch occupies residues 290 to 331 (ARGDGPGAPRPGSTAHPPHAIPNSPPSTPVPHSMPPSPSRIP). The span at 308–328 (HAIPNSPPSTPVPHSMPPSPS) shows a compositional bias: pro residues. Ser357 is a glycosylation site (O-linked (GlcNAc) serine). 2 positions are modified to phosphoserine: Ser361 and Ser365. Tyr393 carries the phosphotyrosine modification. The disordered stretch occupies residues 456–476 (RKYPDSHLPTLGSKTPPASPH). The residue at position 470 (Thr470) is a Phosphothreonine. 2 positions are modified to phosphoserine: Ser474 and Ser526. Coiled-coil stretches lie at residues 557–581 (RETR…QSAL) and 644–685 (MSLL…ELEI). Residue Ser809 is modified to Phosphoserine. The interval 848 to 874 (VLKSQEEAAHTSGQPFHSTGAPGDAKS) is disordered. The stretch at 957–985 (SAKNRAVSIEKAEKKWEEKRQNLDHYNGK) forms a coiled coil. Disordered stretches follow at residues 1003 to 1230 (PNLE…SDAS), 1305 to 1329 (KTKE…TESS), and 1352 to 1377 (PKEA…TEEN). Phosphoserine is present on residues Ser1027, Ser1030, Ser1033, and Ser1044. Over residues 1044–1053 (SPPPPPPPPR) the composition is skewed to pro residues. Basic and acidic residues-rich tracts occupy residues 1155–1167 (EPSR…KDTR), 1174–1192 (PKEK…KSDV), and 1305–1318 (KTKE…DKCH). Residues 1368–1377 (SSSSSPTEEN) show a composition bias toward polar residues. Position 1461 is a phosphoserine (Ser1461). Positions 1464-1490 (FEECDEELERMMMEEKIEEEEEEENGD) form a coiled coil. Disordered stretches follow at residues 1481 to 1572 (EEEE…PKKK), 1606 to 1660 (EEEE…EIRK), and 1677 to 1943 (ENTI…KETS). 2 stretches are compositionally biased toward polar residues: residues 1491–1501 (SVVQNNNTSQM) and 1512–1533 (RTGQ…TRNP). 2 stretches are compositionally biased toward basic and acidic residues: residues 1539 to 1548 (NRTELNKFSH) and 1612 to 1625 (GTLK…RFEI). Residues 1643-1653 (QPSIESTSPIS) show a composition bias toward polar residues. The stretch at 1656-1686 (DEIRKNTYRTLDSLEQTIKQLENTISEMSPK) forms a coiled coil. 2 stretches are compositionally biased toward polar residues: residues 1691–1706 (TSCS…SSHI) and 1731–1747 (IPSA…QTSR). Residue Ser1739 is modified to Phosphoserine. The span at 1763–1775 (KPGKQSKLQDPRQ) shows a compositional bias: basic and acidic residues. The segment covering 1806 to 1825 (SPSSGKSSSLPSSSGDSSNL) has biased composition (low complexity). Polar residues-rich tracts occupy residues 1834–1843 (SIASNPLSPQ) and 1853–1869 (LIPS…SLTH). Ser1841 is subject to Phosphoserine. Residues 1892–1905 (SFSSSPPSPASSVS) show a composition bias toward low complexity. Phosphoserine occurs at positions 1896, 1899, and 1902. The span at 1906-1943 (LNQGAKGTRTIHTPSLTSYKAQNGSSSKATPSTAKETS) shows a compositional bias: polar residues.

In terms of assembly, interacts with CPNE4 (via VWFA domain).

The protein localises to the cytoplasm. It is found in the cytoskeleton. It localises to the microtubule organizing center. The protein resides in the centrosome. Its function is as follows. Required for normal development of intervertebral disks. This is Sickle tail protein homolog (KIAA1217) from Homo sapiens (Human).